A 488-amino-acid chain; its full sequence is Argininosuccinate lyase 2 (488 aa).

It belongs to the lyase 1 family. Argininosuccinate lyase subfamily.

It is found in the cytoplasm. The catalysed reaction is 2-(N(omega)-L-arginino)succinate = fumarate + L-arginine. Its pathway is amino-acid biosynthesis; L-arginine biosynthesis; L-arginine from L-ornithine and carbamoyl phosphate: step 3/3. In Rhizobium meliloti (strain 1021) (Ensifer meliloti), this protein is Argininosuccinate lyase 2.